Reading from the N-terminus, the 356-residue chain is Nicotinate-nucleotide--dimethylbenzimidazole phosphoribosyltransferase (356 aa).

Catalysis depends on glutamate 317, which acts as the Proton acceptor.

Belongs to the CobT family. As to quaternary structure, homodimer.

The catalysed reaction is 5,6-dimethylbenzimidazole + nicotinate beta-D-ribonucleotide = alpha-ribazole 5'-phosphate + nicotinate + H(+). Its pathway is nucleoside biosynthesis; alpha-ribazole biosynthesis; alpha-ribazole from 5,6-dimethylbenzimidazole: step 1/2. Functionally, catalyzes the synthesis of alpha-ribazole-5'-phosphate from nicotinate mononucleotide (NAMN) and 5,6-dimethylbenzimidazole (DMB). This Salmonella gallinarum (strain 287/91 / NCTC 13346) protein is Nicotinate-nucleotide--dimethylbenzimidazole phosphoribosyltransferase.